The primary structure comprises 396 residues: Probable sugar efflux transporter (396 aa).

12 helical membrane passes run 15-35 (VVTLAIAAFIFNTTEFVPVGL), 50-70 (VGIMLTIYAWVVAVMSLPFML), 81-101 (LICLFVLFIASHVLSFLAWNF), 103-123 (VLVISRIGIAFAHAIFWSITA), 136-156 (AQALSLIATGTALAMVLGLPI), 169-189 (TFFAIGMGALITLLCLIKLLP), 209-229 (PALMSLYVLTVVVVTAHYTAY), 246-266 (FATVLLLILGGAGIIGSLVFG), 275-295 (SLVSIAIALLVVCLLLLLPAA), 301-321 (LAILSIFWGIAIMVIGLGMQV), 333-353 (VAMALFSGIFNIGIGAGALVG), and 364-384 (AIGYIGAIPACAALVWAVLIF).

Belongs to the major facilitator superfamily. SotB (TC 2.A.1.2) family.

The protein resides in the cell inner membrane. Functionally, involved in the efflux of sugars. The physiological role may be the reduction of the intracellular concentration of toxic sugars or sugar metabolites. In Salmonella agona (strain SL483), this protein is Probable sugar efflux transporter.